We begin with the raw amino-acid sequence, 403 residues long: Semaphorin-like protein A39 (403 aa).

An N-terminal signal peptide occupies residues 1 to 14 (MIPLLFILFYFANG). In terms of domain architecture, Sema spans 15–403 (IEWHKFETSE…MPQMKKILKM (389 aa)).

The protein belongs to the semaphorin family. Interacts with host VESPR.

Its subcellular location is the secreted. Acts as a semaphorin-like protein and binds to host plexin C1 receptor. May alter the movement of host plexin C1-expressing cells including dendritic cells, monocytes, or granulocytes in the proximity of infected cells. May also regulate host cell cytoskeleton of neighboring cells to improve viral infection. This is Semaphorin-like protein A39 from Homo sapiens (Human).